Here is a 771-residue protein sequence, read N- to C-terminus: Signal transducer and activator of transcription 3 (771 aa).

An Essential for nuclear import motif is present at residues 150–162; it reads DVRKRVQDLEQKM. One can recognise an SH2 domain in the interval 580 to 670; it reads WNEGYIMGFI…DATNILVSPL (91 aa). A Phosphotyrosine modification is found at Y706.

This sequence belongs to the transcription factor STAT family. As to quaternary structure, forms a homodimer or a heterodimer with a related family member, such as STAT1. Interacts with OCAD1.

The protein resides in the cytoplasm. It localises to the nucleus. Transcription factor that binds to the interleukin-6 (IL-6)-responsive elements identified in the promoters of various acute-phase protein genes. This chain is Signal transducer and activator of transcription 3 (STAT3), found in Gallus gallus (Chicken).